Here is a 659-residue protein sequence, read N- to C-terminus: Polyamine transporter 4 (659 aa).

Composition is skewed to polar residues over residues 1-20 (MPSSLTKTESNSDPRTNIQQ) and 28-45 (NVTNSGNLDSTSSSTGSI). The segment at 1 to 81 (MPSSLTKTES…LDWDGPDDPD (81 aa)) is disordered. The Cytoplasmic segment spans residues 1–99 (MPSSLTKTES…KKWYTTMTSA (99 aa)). A helical membrane pass occupies residues 100 to 120 (FLCLVVTMGSSLYVSSVPELV). At 121–128 (ERYHVSQT) the chain is on the extracellular side. A helical transmembrane segment spans residues 129-149 (LALAGLTFYLLGLSTVIGAPL). Residues 150–157 (SEVFGRKP) lie on the Cytoplasmic side of the membrane. Residues 158–178 (VYLFSLPVSMLFTMGVGLSNG) traverse the membrane as a helical segment. The Extracellular segment spans residues 179-187 (HMRIILPLR). A helical membrane pass occupies residues 188–208 (FLSGVFASPALSVGSGTILDI). The Cytoplasmic portion of the chain corresponds to 209-215 (FDVDQVS). Residues 216–236 (VAMTYFVLSPFLGPVLSPIMA) traverse the membrane as a helical segment. At 237-246 (GFATEAKGWR) the chain is on the extracellular side. Residues 247–267 (WSEWIQLIAGGLILPFIALMP) form a helical membrane-spanning segment. Topologically, residues 268–316 (ETHKGIILRKRAKKRNIALKKFSREAQKEFLKTTVTITILRPLKMLVVE) are cytoplasmic. Residues 317–337 (PIVFVFSVYVAFIFAILFGFF) traverse the membrane as a helical segment. The Extracellular portion of the chain corresponds to 338-355 (EAYAVIYRGVYHMSMGIS). Residues 356 to 376 (GLPFIGIGVGLWIGAFFYLYI) form a helical membrane-spanning segment. Residues 377 to 423 (DRKYLFPKPPAGTQPLTEKERTSKRTTPYRGARDAETGELLPVVPEK) lie on the Cytoplasmic side of the membrane. Residues 387-408 (AGTQPLTEKERTSKRTTPYRGA) are disordered. A helical membrane pass occupies residues 424-444 (FLIACKFGSVALPIGLFWQAW). The Extracellular portion of the chain corresponds to 445 to 456 (TARSDVHWMAPV). A helical transmembrane segment spans residues 457-477 (AAGVPFGFGLILIFFSVLMYF). Over 478-486 (STCYPPLTV) the chain is Cytoplasmic. The helical transmembrane segment at 487–509 (ASCLAANNLLRYVMSSVFPLFTI) threads the bilayer. Residues 510–518 (QMYTKMKIK) are Extracellular-facing. Residues 519–539 (WASTLFALVCVVMIPIPWVFE) form a helical membrane-spanning segment. At 540–659 (KWGSKLRHKS…MATDASARMV (120 aa)) the chain is on the cytoplasmic side. A compositionally biased stretch (basic and acidic residues) spans 587–602 (METDPSTREKPGERLS). The segment at 587 to 631 (METDPSTREKPGERLSLRRTHTQPVPASFDREDGQHAQNRNEPIS) is disordered. Phosphothreonine is present on residues T589, T606, and T608. A compositionally biased stretch (polar residues) spans 622-631 (HAQNRNEPIS). 2 positions are modified to phosphoserine: S633 and S646.

This sequence belongs to the major facilitator superfamily. DHA1 family. Polyamines/proton antiporter (TC 2.A.1.2.16) subfamily.

It is found in the cell membrane. Functionally, cell membrane polyamine/proton antiporter, involved in the detoxification of excess polyamines in the cytoplasm. Recognizes spermidine, spermine and the antimalarial drug quinidine, but not quinine, chloroquine and mefloquine. The sequence is that of Polyamine transporter 4 (TPO4) from Saccharomyces cerevisiae (strain ATCC 204508 / S288c) (Baker's yeast).